Here is a 100-residue protein sequence, read N- to C-terminus: Urease subunit gamma (100 aa).

It belongs to the urease gamma subunit family. Heterotrimer of UreA (gamma), UreB (beta) and UreC (alpha) subunits. Three heterotrimers associate to form the active enzyme.

It localises to the cytoplasm. It catalyses the reaction urea + 2 H2O + H(+) = hydrogencarbonate + 2 NH4(+). It participates in nitrogen metabolism; urea degradation; CO(2) and NH(3) from urea (urease route): step 1/1. This Haemophilus influenzae (strain 86-028NP) protein is Urease subunit gamma.